Here is a 293-residue protein sequence, read N- to C-terminus: GDT1-like protein 3 (293 aa).

An N-terminal signal peptide occupies residues 1-25 (MGLISNPTRLILVATIFFLVSSISG). The next 6 helical transmembrane spans lie at 89-109 (FSMI…ALMA), 115-135 (ATVL…STGL), 148-168 (TNSA…YIAW), 200-220 (LFSR…FLAE), 238-258 (AIGV…LAVV), and 272-292 (VATV…FYPP).

It belongs to the GDT1 family.

It is found in the membrane. This Arabidopsis thaliana (Mouse-ear cress) protein is GDT1-like protein 3.